Here is a 271-residue protein sequence, read N- to C-terminus: Orotidine 5'-phosphate decarboxylase (271 aa).

Lys-97 serves as the catalytic Proton donor.

The protein belongs to the OMP decarboxylase family. Type 2 subfamily.

It catalyses the reaction orotidine 5'-phosphate + H(+) = UMP + CO2. It participates in pyrimidine metabolism; UMP biosynthesis via de novo pathway; UMP from orotate: step 2/2. The chain is Orotidine 5'-phosphate decarboxylase from Leptospira borgpetersenii serovar Hardjo-bovis (strain L550).